The chain runs to 276 residues: Pantothenate synthetase (276 aa).

26–33 (MGFLHAGH) contributes to the ATP binding site. Residue H33 is the Proton donor of the active site. Q57 contacts (R)-pantoate. Q57 is a binding site for beta-alanine. Residue 143–146 (GQKD) coordinates ATP. Q149 is a binding site for (R)-pantoate. Residues I172 and 180–183 (MSSR) contribute to the ATP site.

This sequence belongs to the pantothenate synthetase family. In terms of assembly, homodimer.

It is found in the cytoplasm. The enzyme catalyses (R)-pantoate + beta-alanine + ATP = (R)-pantothenate + AMP + diphosphate + H(+). It participates in cofactor biosynthesis; (R)-pantothenate biosynthesis; (R)-pantothenate from (R)-pantoate and beta-alanine: step 1/1. In terms of biological role, catalyzes the condensation of pantoate with beta-alanine in an ATP-dependent reaction via a pantoyl-adenylate intermediate. This is Pantothenate synthetase from Herpetosiphon aurantiacus (strain ATCC 23779 / DSM 785 / 114-95).